We begin with the raw amino-acid sequence, 423 residues long: Histidine--tRNA ligase 2 (423 aa).

This sequence belongs to the class-II aminoacyl-tRNA synthetase family. Homodimer.

The protein localises to the cytoplasm. It carries out the reaction tRNA(His) + L-histidine + ATP = L-histidyl-tRNA(His) + AMP + diphosphate + H(+). The protein is Histidine--tRNA ligase 2 of Bacillus cereus (strain ATCC 10987 / NRS 248).